Consider the following 818-residue polypeptide: Serine/threonine-protein phosphatase 4 regulatory subunit 3 (818 aa).

Positions 1-100 constitute a WH1 domain; it reads MTDTRRRVKV…DEIWEKICQV (100 aa). A compositionally biased stretch (acidic residues) spans 670 to 681; the sequence is FNTDEEDLEDGE. Residues 670-818 form a disordered region; sequence FNTDEEDLED…PLSKKSKLSS (149 aa). The segment covering 703 to 718 has biased composition (basic and acidic residues); the sequence is FMERKKLKDSEEKEVL. A compositionally biased stretch (low complexity) spans 729 to 775; it reads SPSFKLSFSSSPKASLSSPPTASLHPGSPGSPSSPGTGARSSPPSAA. Phosphoserine is present on residues Ser-769 and Ser-770. Residues 788 to 803 show a composition bias toward acidic residues; sequence YPDDDEEDEDEEDADS.

Belongs to the SMEK family. As to quaternary structure, serine/threonine-protein phosphatase 4 (PP4) occurs in different assemblies of the catalytic and one or more regulatory subunits.

In terms of biological role, regulatory subunit of serine/threonine-protein phosphatase 4. This chain is Serine/threonine-protein phosphatase 4 regulatory subunit 3 (smek1), found in Danio rerio (Zebrafish).